Reading from the N-terminus, the 232-residue chain is Very-long-chain (3R)-3-hydroxyacyl-CoA dehydratase 4 (232 aa).

The Cytoplasmic portion of the chain corresponds to 1-19; sequence MGPSVLPAWLQPRYRKNVY. The chain crosses the membrane as a helical span at residues 20 to 40; sequence LFIYYLIQFCGHSWILANMTV. Residues 41-56 are Lumenal-facing; that stretch reads RFFSFGKDSMADTFYA. Residues 57 to 77 traverse the membrane as a helical segment; it reads IGLVMRVCQSISLLELLHIYI. At 78–112 the chain is on the cytoplasmic side; that stretch reads GIESNQLFPRFLQLTERVIILFGVITSQEEVQEKC. Residues 113-133 form a helical membrane-spanning segment; it reads VVCVLFILWNLLDMVRYTYSM. Residues 134–135 are Lumenal-facing; sequence LS. Residues 136–156 traverse the membrane as a helical segment; that stretch reads VIGTSYAALTWLSQTLWMPIY. Tyr-156 is an active-site residue. Pro-157 is a topological domain (cytoplasmic). Residues 158 to 178 form a helical membrane-spanning segment; that stretch reads LCVLAEAFTIYQSLPYFESFG. The active site involves Glu-163. Topologically, residues 179–189 are lumenal; it reads TNSTVLPFDLS. Residues 190–210 traverse the membrane as a helical segment; sequence TCFPYVLKLYLMMLFIGMYFT. Residues 211 to 232 are Cytoplasmic-facing; the sequence is YSHLYTERKDFLRVFSVKQKNV.

It belongs to the very long-chain fatty acids dehydratase HACD family. As to quaternary structure, may interact with enzymes of the ELO family (including ELOVL1); with those enzymes that mediate condensation, the first of the four steps of the reaction cycle responsible for fatty acids elongation, may be part of a larger fatty acids elongase complex.

It is found in the endoplasmic reticulum membrane. The enzyme catalyses a very-long-chain (3R)-3-hydroxyacyl-CoA = a very-long-chain (2E)-enoyl-CoA + H2O. The catalysed reaction is (3R)-hydroxyhexadecanoyl-CoA = (2E)-hexadecenoyl-CoA + H2O. It participates in lipid metabolism; fatty acid biosynthesis. Catalyzes the third of the four reactions of the long-chain fatty acids elongation cycle. This endoplasmic reticulum-bound enzymatic process, allows the addition of two carbons to the chain of long- and very long-chain fatty acids/VLCFAs per cycle. This enzyme catalyzes the dehydration of the 3-hydroxyacyl-CoA intermediate into trans-2,3-enoyl-CoA, within each cycle of fatty acid elongation. Thereby, it participates in the production of VLCFAs of different chain lengths that are involved in multiple biological processes as precursors of membrane lipids and lipid mediators. The sequence is that of Very-long-chain (3R)-3-hydroxyacyl-CoA dehydratase 4 from Mus musculus (Mouse).